The chain runs to 206 residues: Na(+)-translocating NADH-quinone reductase subunit E (206 aa).

6 helical membrane-spanning segments follow: residues Ala-12–Ile-32, Ile-36–Val-56, Phe-85–Thr-105, Gly-118–Val-138, Val-148–Ile-168, and Leu-184–Val-204.

The protein belongs to the NqrDE/RnfAE family. Composed of six subunits; NqrA, NqrB, NqrC, NqrD, NqrE and NqrF.

It is found in the cell inner membrane. It catalyses the reaction a ubiquinone + n Na(+)(in) + NADH + H(+) = a ubiquinol + n Na(+)(out) + NAD(+). Functionally, NQR complex catalyzes the reduction of ubiquinone-1 to ubiquinol by two successive reactions, coupled with the transport of Na(+) ions from the cytoplasm to the periplasm. NqrA to NqrE are probably involved in the second step, the conversion of ubisemiquinone to ubiquinol. The chain is Na(+)-translocating NADH-quinone reductase subunit E from Alcanivorax borkumensis (strain ATCC 700651 / DSM 11573 / NCIMB 13689 / SK2).